Consider the following 488-residue polypeptide: Zinc finger protein 92 (488 aa).

The 72-residue stretch at 14-85 (VSFEDVSVYF…DDGMESAARS (72 aa)) folds into the KRAB domain. 6 consecutive C2H2-type zinc fingers follow at residues 141-163 (YLCQ…RIIH), 169-191 (YECS…QRIH), 197-219 (YECG…QVIH), 225-247 (FVCR…TRIH), 253-275 (FECT…QRIH), and 281-303 (YICK…QLIH). A C2H2-type 7; degenerate zinc finger spans residues 309–331 (FTCHEYGKAFRGLSGLSQHQRVH). Residues 337–359 (YECSECGRAFGRRANLFKHQVVH) form a C2H2-type 8 zinc finger. Residues 387–408 (QQPQEAGEGSSAEPQPIDTNEK) form a disordered region. Residues 410–432 (QVCERCGQVFENKLLLCRHLRIH) form a C2H2-type 9 zinc finger. A disordered region spans residues 435-488 (EDDKKQKPVISSTSVLEDKSLLSQHLEAQPTEESDSEGSVVFVYAEKPHGPSSP).

It belongs to the krueppel C2H2-type zinc-finger protein family. As to expression, highly expressed in pancreatic islets.

The protein resides in the nucleus. KRAB domain-containing zinc-finger protein that represses B1/Alu SINE transposable elements and modulates the transcription of nearby genes in a tissue-specific manner. It regulates glucose homeostasis and lipid metabolism by modulating the expression of the endocrine cell-defining transcription factor, MAFB, in pancreatic islets and, the fat metabolism regulator, ACACB, in adipose tissue and muscle. The chain is Zinc finger protein 92 (Zfp92) from Mus musculus (Mouse).